Here is a 355-residue protein sequence, read N- to C-terminus: MQVSDFHFDLPDELIARYPMAERTASRLLQLDGQSGALRHGQFVDVLDQLNPGDLLVFNNTRVIPARMFGQKASGGKLEVLVERILDEHSVLAHVRASKAPKPGTRLILDGGPDGEKVDAEMRARHDALFEIHFLDPRPVLEILEAIGHMPLPPYIDRPDEDADKERYQTVYNQKPGAVAAPTAGLHFDEPLLAKIRAKGVETAFVTLHVGAGTFQPVRVDKIEDHHMHSEYAEVPQEVVDAIAATRARGGRVIAVGTTSVRSLESAAKASLALSKPLAPFFSDTDIFIFPGYQFQVVDAMVTNFHLPESTLIMLVSAFAGYDHVMAAYQAAVAEQYRFFSYGDAMFVTRRRAVA.

It belongs to the QueA family. Monomer.

It localises to the cytoplasm. It carries out the reaction 7-aminomethyl-7-carbaguanosine(34) in tRNA + S-adenosyl-L-methionine = epoxyqueuosine(34) in tRNA + adenine + L-methionine + 2 H(+). Its pathway is tRNA modification; tRNA-queuosine biosynthesis. Functionally, transfers and isomerizes the ribose moiety from AdoMet to the 7-aminomethyl group of 7-deazaguanine (preQ1-tRNA) to give epoxyqueuosine (oQ-tRNA). This is S-adenosylmethionine:tRNA ribosyltransferase-isomerase from Aeromonas salmonicida (strain A449).